The primary structure comprises 255 residues: Imidazole glycerol phosphate synthase subunit HisF (255 aa).

Residues Asp-13 and Asp-132 contribute to the active site.

Belongs to the HisA/HisF family. As to quaternary structure, heterodimer of HisH and HisF.

The protein resides in the cytoplasm. The catalysed reaction is 5-[(5-phospho-1-deoxy-D-ribulos-1-ylimino)methylamino]-1-(5-phospho-beta-D-ribosyl)imidazole-4-carboxamide + L-glutamine = D-erythro-1-(imidazol-4-yl)glycerol 3-phosphate + 5-amino-1-(5-phospho-beta-D-ribosyl)imidazole-4-carboxamide + L-glutamate + H(+). Its pathway is amino-acid biosynthesis; L-histidine biosynthesis; L-histidine from 5-phospho-alpha-D-ribose 1-diphosphate: step 5/9. Its function is as follows. IGPS catalyzes the conversion of PRFAR and glutamine to IGP, AICAR and glutamate. The HisF subunit catalyzes the cyclization activity that produces IGP and AICAR from PRFAR using the ammonia provided by the HisH subunit. In Leptospira biflexa serovar Patoc (strain Patoc 1 / ATCC 23582 / Paris), this protein is Imidazole glycerol phosphate synthase subunit HisF.